Here is a 337-residue protein sequence, read N- to C-terminus: tRNA N6-adenosine threonylcarbamoyltransferase (337 aa).

Fe cation is bound by residues His-111 and His-115. Substrate contacts are provided by residues 134–138 (LVSGG), Asp-167, Gly-180, and Asn-272. Fe cation is bound at residue Asp-300.

It belongs to the KAE1 / TsaD family. Fe(2+) serves as cofactor.

The protein localises to the cytoplasm. It catalyses the reaction L-threonylcarbamoyladenylate + adenosine(37) in tRNA = N(6)-L-threonylcarbamoyladenosine(37) in tRNA + AMP + H(+). In terms of biological role, required for the formation of a threonylcarbamoyl group on adenosine at position 37 (t(6)A37) in tRNAs that read codons beginning with adenine. Is involved in the transfer of the threonylcarbamoyl moiety of threonylcarbamoyl-AMP (TC-AMP) to the N6 group of A37, together with TsaE and TsaB. TsaD likely plays a direct catalytic role in this reaction. This chain is tRNA N6-adenosine threonylcarbamoyltransferase, found in Escherichia coli (strain SMS-3-5 / SECEC).